Here is a 337-residue protein sequence, read N- to C-terminus: Anthranilate phosphoribosyltransferase (337 aa).

Residues G81, 84 to 85 (GD), S89, 91 to 94 (NVST), 109 to 117 (KHGNRAASS), and A121 contribute to the 5-phospho-alpha-D-ribose 1-diphosphate site. G81 serves as a coordination point for anthranilate. Residue S93 participates in Mg(2+) binding. Position 112 (N112) interacts with anthranilate. R167 contacts anthranilate. D226 and E227 together coordinate Mg(2+).

The protein belongs to the anthranilate phosphoribosyltransferase family. Homodimer. Mg(2+) serves as cofactor.

It carries out the reaction N-(5-phospho-beta-D-ribosyl)anthranilate + diphosphate = 5-phospho-alpha-D-ribose 1-diphosphate + anthranilate. The protein operates within amino-acid biosynthesis; L-tryptophan biosynthesis; L-tryptophan from chorismate: step 2/5. Catalyzes the transfer of the phosphoribosyl group of 5-phosphorylribose-1-pyrophosphate (PRPP) to anthranilate to yield N-(5'-phosphoribosyl)-anthranilate (PRA). The polypeptide is Anthranilate phosphoribosyltransferase (Methylobacterium nodulans (strain LMG 21967 / CNCM I-2342 / ORS 2060)).